A 64-amino-acid chain; its full sequence is MEIQVVDNNVEKAIRVLKRKLQQEGLFREMKQRKFYEKPSVKRKRKEKEAQRRLRKKMRMMKKA.

The disordered stretch occupies residues 37-64; the sequence is EKPSVKRKRKEKEAQRRLRKKMRMMKKA. A compositionally biased stretch (basic residues) spans 53-64; it reads RLRKKMRMMKKA.

Belongs to the bacterial ribosomal protein bS21 family.

This Syntrophotalea carbinolica (strain DSM 2380 / NBRC 103641 / GraBd1) (Pelobacter carbinolicus) protein is Small ribosomal subunit protein bS21.